We begin with the raw amino-acid sequence, 704 residues long: Mannan-binding lectin serine protease 1 (704 aa).

A signal peptide spans 1–24 (MRFLSFWRLLLYHALCLALPEVSA). One can recognise a CUB 1 domain in the interval 25–143 (HTVELNEMFG…TGFDAHYMAV (119 aa)). A homodimerization region spans residues 25 to 189 (HTVELNEMFG…HTDNRTCRVE (165 aa)). Residues 25–189 (HTVELNEMFG…HTDNRTCRVE (165 aa)) are interaction with MBL2. An interaction with FCN2 region spans residues 25–283 (HTVELNEMFG…STQTHSVQIL (259 aa)). The segment at 25 to 305 (HTVELNEMFG…RLSYRAAGNE (281 aa)) is interaction with MBL1. Residue Asn54 is glycosylated (N-linked (GlcNAc...) asparagine). 7 residues coordinate Ca(2+): Glu73, Asp81, Asp126, Ser128, Asp144, Val145, and Glu147. Cys78 and Cys96 form a disulfide bridge. In terms of domain architecture, EGF-like; calcium-binding spans 144–187 (DVDECKEREDEELSCDHYCHNYIGGYYCSCRFGYILHTDNRTCR). Intrachain disulfides connect Cys148–Cys162, Cys158–Cys171, Cys173–Cys186, and Cys190–Cys217. Residues Asn164, Tyr165, and Gly168 each coordinate Ca(2+). Residue Asn164 is modified to (3R)-3-hydroxyasparagine. Asn183 is a glycosylation site (N-linked (GlcNAc...) asparagine). The 113-residue stretch at 190-302 (CSGNLFTQRT…RGWRLSYRAA (113 aa)) folds into the CUB 2 domain. Positions 240, 250, 287, and 289 each coordinate Ca(2+). Cys247 and Cys265 are joined by a disulfide. Sushi domains are found at residues 304-369 (NECP…TCKI) and 370-439 (VDCG…TCLP). Cystine bridges form between Cys306–Cys354, Cys334–Cys367, Cys372–Cys419, Cys402–Cys437, Cys441–Cys577, Cys480–Cys496, Cys619–Cys636, and Cys647–Cys677. 2 N-linked (GlcNAc...) asparagine glycosylation sites follow: Asn390 and Asn412. The Peptidase S1 domain maps to 454–701 (IFNGRPAQKG…NKDWIQRITG (248 aa)). Catalysis depends on charge relay system residues His495 and Asp557. The active-site Charge relay system is the Ser651.

The protein belongs to the peptidase S1 family. In terms of assembly, homodimer. Interacts with the oligomeric lectins MBL2, FCN2 and FCN3; triggers the lectin pathway of complement through activation of C3. Interacts with SERPING1. Interacts with COLEC11; probably triggers the lectin pathway of complement. In terms of processing, the iron and 2-oxoglutarate dependent 3-hydroxylation of aspartate and asparagine is (R) stereospecific within EGF domains. N-glycosylated. Some N-linked glycan are of the complex-type. Post-translationally, autoproteolytic processing of the proenzyme produces the active enzyme composed on the heavy and the light chain held together by a disulfide bond. Isoform 1 but not isoform 2 is activated through autoproteolytic processing. As to expression, protein of the plasma which is primarily expressed by liver.

The protein resides in the secreted. With respect to regulation, inhibited by SERPING1 and A2M. Functionally, functions in the lectin pathway of complement, which performs a key role in innate immunity by recognizing pathogens through patterns of sugar moieties and neutralizing them. The lectin pathway is triggered upon binding of mannan-binding lectin (MBL) and ficolins to sugar moieties which leads to activation of the associated proteases MASP1 and MASP2. Functions as an endopeptidase and may activate MASP2 or C2 or directly activate C3 the key component of complement reaction. Isoform 2 may have an inhibitory effect on the activation of the lectin pathway of complement or may cleave IGFBP5. Also plays a role in development. This chain is Mannan-binding lectin serine protease 1 (Masp1), found in Mus musculus (Mouse).